Consider the following 61-residue polypeptide: Photosystem II reaction center protein K (61 aa).

The propeptide occupies Met-1–Ala-24. Residues Ile-32–Phe-52 traverse the membrane as a helical segment.

It belongs to the PsbK family. As to quaternary structure, PSII is composed of 1 copy each of membrane proteins PsbA, PsbB, PsbC, PsbD, PsbE, PsbF, PsbH, PsbI, PsbJ, PsbK, PsbL, PsbM, PsbT, PsbX, PsbY, PsbZ, Psb30/Ycf12, at least 3 peripheral proteins of the oxygen-evolving complex and a large number of cofactors. It forms dimeric complexes.

The protein resides in the plastid. It is found in the chloroplast thylakoid membrane. Its function is as follows. One of the components of the core complex of photosystem II (PSII). PSII is a light-driven water:plastoquinone oxidoreductase that uses light energy to abstract electrons from H(2)O, generating O(2) and a proton gradient subsequently used for ATP formation. It consists of a core antenna complex that captures photons, and an electron transfer chain that converts photonic excitation into a charge separation. This is Photosystem II reaction center protein K from Triticum aestivum (Wheat).